Reading from the N-terminus, the 151-residue chain is Transcriptional repressor NrdR (151 aa).

The disordered stretch occupies residues 1-24 (MRCPKCQHNGTRVLDSRPSDESRS). A zinc finger spans residues 3-34 (CPKCQHNGTRVLDSRPSDESRSIKRRRECEKC). Basic and acidic residues predominate over residues 14–24 (LDSRPSDESRS). The 91-residue stretch at 49–139 (LLIIKKDGMR…VYRQFKDINV (91 aa)) folds into the ATP-cone domain.

The protein belongs to the NrdR family. Zn(2+) serves as cofactor.

Its function is as follows. Negatively regulates transcription of bacterial ribonucleotide reductase nrd genes and operons by binding to NrdR-boxes. The protein is Transcriptional repressor NrdR of Shouchella clausii (strain KSM-K16) (Alkalihalobacillus clausii).